The chain runs to 644 residues: MFQDNPLLAQLKQQLHSQTPRAEGVVKATEKGFGFLEVDAQKSYFIPPPQMKKVMHGDRIIAVIHSEKERESAEPEELVEPFLTRFVGKVQGKNDRLAIVPDHPLLKDAIPCRAARGLNHEFKEGDWAVAEMRRHPLKGDRSFYAELTQYITFGDDHFVPWWVTLARHNLEKEAPDGVATEMLDEGLVREDLTALDFVTIDSASTEDMDDALFAKALPDGKLQLIVAIADPTAWIAEGSKLDKAAKIRAFTNYLPGFNIPMLPRELSDDLCSLRANEVRPVLACRMTLSADGTIEDNIEFFAATIESKAKLVYDQVSDWLENTGDWQPESEAIAEQVRLLAQICQRRGEWRHNHALVFKDRPDYRFILGEKGEVLDIVAEPRRIANRIVEEAMIAANICAARVLRDKLGFGIYNVHMGFDPANADALAALLKTHGLHVDAEEVLTLDGFCKLRRELDAQPTGFLDSRIRRFQSFAEISTEPGPHFGLGLEAYATWTSPIRKYGDMINHRLLKAVIKGETATRPQDEITVQMAERRRLNRMAERDVGDWLYARFLKDKAGTDTRFAAEIVDISRGGMRVRLVDNGAIAFIPAPFLHAVRDELVCSQENGTVQIKGETAYKVTDVIDVTIAEVRMETRSIIARPVA.

The 328-residue stretch at 189–516 (REDLTALDFV…NHRLLKAVIK (328 aa)) folds into the RNB domain. An S1 motif domain is found at 561–643 (DTRFAAEIVD…ETRSIIARPV (83 aa)).

The protein belongs to the RNR ribonuclease family. RNase II subfamily.

The protein resides in the cytoplasm. The catalysed reaction is Exonucleolytic cleavage in the 3'- to 5'-direction to yield nucleoside 5'-phosphates.. Its function is as follows. Involved in mRNA degradation. Hydrolyzes single-stranded polyribonucleotides processively in the 3' to 5' direction. This is Exoribonuclease 2 from Escherichia coli O17:K52:H18 (strain UMN026 / ExPEC).